The following is a 428-amino-acid chain: Enolase (428 aa).

Residue Q163 participates in (2R)-2-phosphoglycerate binding. The active-site Proton donor is the E205. D242, E285, and D312 together coordinate Mg(2+). (2R)-2-phosphoglycerate is bound by residues K337, R366, S367, and K388. K337 functions as the Proton acceptor in the catalytic mechanism.

It belongs to the enolase family. Mg(2+) serves as cofactor.

The protein resides in the cytoplasm. The protein localises to the secreted. It localises to the cell surface. The enzyme catalyses (2R)-2-phosphoglycerate = phosphoenolpyruvate + H2O. The protein operates within carbohydrate degradation; glycolysis; pyruvate from D-glyceraldehyde 3-phosphate: step 4/5. Catalyzes the reversible conversion of 2-phosphoglycerate (2-PG) into phosphoenolpyruvate (PEP). It is essential for the degradation of carbohydrates via glycolysis. The protein is Enolase of Moorella thermoacetica (strain ATCC 39073 / JCM 9320).